The following is a 101-amino-acid chain: MKKFFLLFLALGAVAFAGEGESMIKAYSVVAAGVGLGLAALGGAVGMGHTAAATIAGTARNPGLGGKLMTTMFIALAMIEAQVIYTLVIALIALYANPFIG.

The next 2 helical transmembrane spans lie at 28 to 48 and 72 to 92; these read SVVAAGVGLGLAALGGAVGMG and MFIALAMIEAQVIYTLVIALI.

It belongs to the ATPase C chain family. F-type ATPases have 2 components, F(1) - the catalytic core - and F(0) - the membrane proton channel. F(1) has five subunits: alpha(3), beta(3), gamma(1), delta(1), epsilon(1). F(0) has three main subunits: a(1), b(2) and c(10-14). The alpha and beta chains form an alternating ring which encloses part of the gamma chain. F(1) is attached to F(0) by a central stalk formed by the gamma and epsilon chains, while a peripheral stalk is formed by the delta and b chains.

It localises to the cell inner membrane. F(1)F(0) ATP synthase produces ATP from ADP in the presence of a proton or sodium gradient. F-type ATPases consist of two structural domains, F(1) containing the extramembraneous catalytic core and F(0) containing the membrane proton channel, linked together by a central stalk and a peripheral stalk. During catalysis, ATP synthesis in the catalytic domain of F(1) is coupled via a rotary mechanism of the central stalk subunits to proton translocation. In terms of biological role, key component of the F(0) channel; it plays a direct role in translocation across the membrane. A homomeric c-ring of between 10-14 subunits forms the central stalk rotor element with the F(1) delta and epsilon subunits. In Sulfurovum sp. (strain NBC37-1), this protein is ATP synthase subunit c.